A 289-amino-acid chain; its full sequence is ATP synthase subunit a (289 aa).

6 helical membrane passes run 43–63, 101–121, 160–180, 193–213, 232–252, and 259–279; these read AFHV…VLIF, SAVI…MNAV, LSVF…GGFI, IFVQ…TLIA, VFIL…GLGI, and AVFH…LTIV.

It belongs to the ATPase A chain family. As to quaternary structure, F-type ATPases have 2 components, CF(1) - the catalytic core - and CF(0) - the membrane proton channel. CF(1) has five subunits: alpha(3), beta(3), gamma(1), delta(1), epsilon(1). CF(0) has three main subunits: a(1), b(2) and c(9-12). The alpha and beta chains form an alternating ring which encloses part of the gamma chain. CF(1) is attached to CF(0) by a central stalk formed by the gamma and epsilon chains, while a peripheral stalk is formed by the delta and b chains.

Its subcellular location is the cell inner membrane. In terms of biological role, key component of the proton channel; it plays a direct role in the translocation of protons across the membrane. The protein is ATP synthase subunit a of Pseudomonas syringae pv. tomato (strain ATCC BAA-871 / DC3000).